The following is a 563-amino-acid chain: Arginine--tRNA ligase (563 aa).

A 'HIGH' region motif is present at residues 121–131 (PNIAKPFSIGH).

Belongs to the class-I aminoacyl-tRNA synthetase family. Monomer.

The protein resides in the cytoplasm. It carries out the reaction tRNA(Arg) + L-arginine + ATP = L-arginyl-tRNA(Arg) + AMP + diphosphate. This Streptococcus equi subsp. equi (strain 4047) protein is Arginine--tRNA ligase.